The chain runs to 186 residues: Putative manganese efflux pump MntP (186 aa).

The next 6 helical transmembrane spans lie at 5 to 25 (VLIGEILTLSMMAFALGMDAF), 41 to 61 (VFQIGVIIGLFHVIMPLGGMI), 72 to 92 (ALAGYIGGALLLVLGIQMIVA), 107 to 127 (FGLFVFAVGVSLDSFSVGLSL), 135 to 155 (ILTIFLFGLFSMVLTWAGLLL), and 166 to 186 (YSEALGGAILLSFGLKLLLPI).

This sequence belongs to the MntP (TC 9.B.29) family.

It is found in the cell membrane. Probably functions as a manganese efflux pump. In Bacillus licheniformis (strain ATCC 14580 / DSM 13 / JCM 2505 / CCUG 7422 / NBRC 12200 / NCIMB 9375 / NCTC 10341 / NRRL NRS-1264 / Gibson 46), this protein is Putative manganese efflux pump MntP.